Here is a 331-residue protein sequence, read N- to C-terminus: Probable allantoicase (331 aa).

It belongs to the allantoicase family.

It catalyses the reaction allantoate + H2O = (S)-ureidoglycolate + urea. It participates in nitrogen metabolism; (S)-allantoin degradation; (S)-ureidoglycolate from allantoate (aminidohydrolase route): step 1/1. The chain is Probable allantoicase from Pseudomonas fluorescens (strain SBW25).